Reading from the N-terminus, the 106-residue chain is uncharacterized protein (106 aa).

This is an uncharacterized protein from Bacillus subtilis (strain 168).